Here is a 99-residue protein sequence, read N- to C-terminus: NADH-ubiquinone oxidoreductase chain 4L (99 aa).

Transmembrane regions (helical) follow at residues 1-21 (MTIYSYLLLLCMVMFVTFFTQ), 25-45 (ILSLMVVLESLMLITLSSVAV), and 56-76 (VMILLLCFAAAEAALSLSLLV).

The protein belongs to the complex I subunit 4L family.

It is found in the mitochondrion membrane. It carries out the reaction a ubiquinone + NADH + 5 H(+)(in) = a ubiquinol + NAD(+) + 4 H(+)(out). In terms of biological role, core subunit of the mitochondrial membrane respiratory chain NADH dehydrogenase (Complex I) that is believed to belong to the minimal assembly required for catalysis. Complex I functions in the transfer of electrons from NADH to the respiratory chain. The immediate electron acceptor for the enzyme is believed to be ubiquinone. The protein is NADH-ubiquinone oxidoreductase chain 4L (ND4L) of Albinaria caerulea (Land snail).